Here is a 400-residue protein sequence, read N- to C-terminus: GTPase Obg (400 aa).

The Obg domain occupies 1 to 159 (MRFVDEAVIT…REIRLELKVL (159 aa)). An OBG-type G domain is found at 160 to 333 (ADVGLLGMPN…VVYYLMDQIE (174 aa)). GTP-binding positions include 166-173 (GMPNAGKS), 191-195 (FTTMV), 213-216 (DIPG), 283-286 (NKLD), and 314-316 (SGL). Mg(2+)-binding residues include serine 173 and threonine 193.

It belongs to the TRAFAC class OBG-HflX-like GTPase superfamily. OBG GTPase family. In terms of assembly, monomer. Requires Mg(2+) as cofactor.

The protein resides in the cytoplasm. Its function is as follows. An essential GTPase which binds GTP, GDP and possibly (p)ppGpp with moderate affinity, with high nucleotide exchange rates and a fairly low GTP hydrolysis rate. Plays a role in control of the cell cycle, stress response, ribosome biogenesis and in those bacteria that undergo differentiation, in morphogenesis control. In Acinetobacter baylyi (strain ATCC 33305 / BD413 / ADP1), this protein is GTPase Obg.